Here is a 417-residue protein sequence, read N- to C-terminus: UDP-N-acetylmuramoylalanine--D-glutamate ligase (417 aa).

108 to 114 lines the ATP pocket; it reads GSNGKTT.

This sequence belongs to the MurCDEF family.

It is found in the cytoplasm. The enzyme catalyses UDP-N-acetyl-alpha-D-muramoyl-L-alanine + D-glutamate + ATP = UDP-N-acetyl-alpha-D-muramoyl-L-alanyl-D-glutamate + ADP + phosphate + H(+). Its pathway is cell wall biogenesis; peptidoglycan biosynthesis. Cell wall formation. Catalyzes the addition of glutamate to the nucleotide precursor UDP-N-acetylmuramoyl-L-alanine (UMA). The protein is UDP-N-acetylmuramoylalanine--D-glutamate ligase of Chlamydia pneumoniae (Chlamydophila pneumoniae).